Reading from the N-terminus, the 555-residue chain is Pentatricopeptide repeat-containing protein At2g44880 (555 aa).

12 PPR repeats span residues 41–75 (DSFL…TCFA), 77–111 (DNFT…GFCA), 112–142 (DMYV…MPHR), 143–173 (SEVS…MPHV), 175–205 (DVVI…MTHK), 206–240 (TVIT…NLVS), 241–267 (WNTM…MQAT), 273–307 (DDVT…KLDK), 308–342 (KVKV…QVAS), 343–370 (WNAM…MIEE), 373–407 (DEIT…GLNA), and 408–438 (KIEH…MPFE). A type E motif region spans residues 443–518 (ILSSFLSACG…EVGCSLIEIN (76 aa)). The tract at residues 519–549 (YIVSEFISGDTTHPHRRSIHLVLGDLLMHMN) is type E(+) motif.

The protein belongs to the PPR family. PCMP-E subfamily.

The polypeptide is Pentatricopeptide repeat-containing protein At2g44880 (PCMP-E9) (Arabidopsis thaliana (Mouse-ear cress)).